A 485-amino-acid polypeptide reads, in one-letter code: uncharacterized protein (485 aa).

3 helical membrane-spanning segments follow: residues 284-304, 328-348, and 353-373; these read LLAL…YPLF, LLDL…SFIK, and LALT…YNCL.

It belongs to the CBF/MAK21 family.

It is found in the membrane. This is an uncharacterized protein from Schizosaccharomyces pombe (strain 972 / ATCC 24843) (Fission yeast).